Reading from the N-terminus, the 428-residue chain is Histidine--tRNA ligase (428 aa).

This sequence belongs to the class-II aminoacyl-tRNA synthetase family. Homodimer.

It localises to the cytoplasm. It carries out the reaction tRNA(His) + L-histidine + ATP = L-histidyl-tRNA(His) + AMP + diphosphate + H(+). This is Histidine--tRNA ligase from Chromohalobacter salexigens (strain ATCC BAA-138 / DSM 3043 / CIP 106854 / NCIMB 13768 / 1H11).